Here is a 408-residue protein sequence, read N- to C-terminus: MKNIIILIINTGSSSLKFTLYEYQYQSEQILASGIIEKIKTTQAIIKIKFKNKFLELTNLNIKSHKKALKHLIKTLTNKKTKIINYLDQIQGIGHRIVHGGAKFKNSVIINQNVLNELKKISHLAPLHNPIAIKVIEEMFILFPNAKQVACFDTSWHQTMNQKAFLYATPYSWYKDYHIRKYGFHGLSYAYITKRTAIILNKNIEDLNLIILHLGNGASINAVQKGRSYDTSMGLTPLEGLVMGTRSGDIDPTIIPLMSKILKKTTKQIENILNKESGMLGISCKSNDLRDIWIESNNNEYNSKLAVEIMTYRIKKYIGSYLAALDFNIDAIIFTAGIGTSDYEIRKLSLQGFEKIGIKIDFQKNNLAIDKNTEYDISSNQSNIKILVIPTNEELTILEDTYDLIKDN.

Mg(2+) is bound at residue Asn-10. Lys-17 contributes to the ATP binding site. A substrate-binding site is contributed by Arg-96. Catalysis depends on Asp-153, which acts as the Proton donor/acceptor. Residues 213–217 (HLGNG) and 288–290 (DLR) contribute to the ATP site. Mg(2+) is bound at residue Glu-393.

This sequence belongs to the acetokinase family. As to quaternary structure, homodimer. Mg(2+) is required as a cofactor. Mn(2+) serves as cofactor.

It localises to the cytoplasm. It carries out the reaction acetate + ATP = acetyl phosphate + ADP. Its pathway is metabolic intermediate biosynthesis; acetyl-CoA biosynthesis; acetyl-CoA from acetate: step 1/2. Its function is as follows. Catalyzes the formation of acetyl phosphate from acetate and ATP. Can also catalyze the reverse reaction. The chain is Acetate kinase from Borrelia duttonii (strain Ly).